The primary structure comprises 561 residues: MADNYRSRIVTQGTQRSPNRAMLRAVGFGDEDFSKPIIGIANGFSTITPCNMGINDLAMRAEAATRLAGGMPQLFGTITISDGISMGTEGMKYSLVSREVIADSIETVCNGQSLDGVLAIGGCDKNMPGAMIAMARMNIPAIFVYGGTIKPGRYKDCDLTVVSSFEAVGQYSAGKISEEDLIGIERNACPGAGSCGGMFTANTMSSIFEAMGMSLPYSSTMAAEDAEKADSTEESAKVLVEAVRKQILPSQILTRKAFENAISVIMAVGGSTNAVLHLLAISRTIGVELSIDDFETIRQRVPVICDLKPSGRYVTVDLHKAGGIPQVMKILLVNGLLHGDALTISGQTIAEILADIPDQPPSGQDVIRPFSNPVYKEGHLAILKGNLATEGAVAKISGVKTPVITGPARVFESEETCLEAILAGKIQAGDVVVVRYEGPVGGPGMREMLAPTSAIIGAGLGDSVGLITDGRFSGGTYGMVVGHVAPEAAVGGTIALVEEGDQITIDARQRLLSLNVSEEELTRRRNHWQPRPPRYKTGILGKFAKLVSSSSLGALTDLNLF.

Cys50 provides a ligand contact to [2Fe-2S] cluster. Residue Asp82 coordinates Mg(2+). Cys123 is a [2Fe-2S] cluster binding site. Asp124 and Lys125 together coordinate Mg(2+). Lys125 carries the N6-carboxylysine modification. Cys195 serves as a coordination point for [2Fe-2S] cluster. Glu447 is a binding site for Mg(2+). The Proton acceptor role is filled by Ser473.

Belongs to the IlvD/Edd family. As to quaternary structure, homodimer. Requires [2Fe-2S] cluster as cofactor. Mg(2+) is required as a cofactor.

It carries out the reaction (2R)-2,3-dihydroxy-3-methylbutanoate = 3-methyl-2-oxobutanoate + H2O. It catalyses the reaction (2R,3R)-2,3-dihydroxy-3-methylpentanoate = (S)-3-methyl-2-oxopentanoate + H2O. It functions in the pathway amino-acid biosynthesis; L-isoleucine biosynthesis; L-isoleucine from 2-oxobutanoate: step 3/4. Its pathway is amino-acid biosynthesis; L-valine biosynthesis; L-valine from pyruvate: step 3/4. In terms of biological role, functions in the biosynthesis of branched-chain amino acids. Catalyzes the dehydration of (2R,3R)-2,3-dihydroxy-3-methylpentanoate (2,3-dihydroxy-3-methylvalerate) into 2-oxo-3-methylpentanoate (2-oxo-3-methylvalerate) and of (2R)-2,3-dihydroxy-3-methylbutanoate (2,3-dihydroxyisovalerate) into 2-oxo-3-methylbutanoate (2-oxoisovalerate), the penultimate precursor to L-isoleucine and L-valine, respectively. This Microcystis aeruginosa (strain NIES-843 / IAM M-2473) protein is Dihydroxy-acid dehydratase.